Reading from the N-terminus, the 337-residue chain is Large ribosomal subunit protein uL3 (337 aa).

It belongs to the universal ribosomal protein uL3 family. In terms of assembly, part of the 50S ribosomal subunit. Forms a cluster with proteins L14 and L24e.

Its function is as follows. One of the primary rRNA binding proteins, it binds directly near the 3'-end of the 23S rRNA, where it nucleates assembly of the 50S subunit. The chain is Large ribosomal subunit protein uL3 from Methanospirillum hungatei JF-1 (strain ATCC 27890 / DSM 864 / NBRC 100397 / JF-1).